A 663-amino-acid chain; its full sequence is Probable acetolactate synthase 2, chloroplastic (663 aa).

Residues 1–26 (MAAAAAAASLSVSDAAAKLPKPGGQV) are compositionally biased toward low complexity. The segment at 1–56 (MAAAAAAASLSVSDAAAKLPKPGGQVQRRRDRDRPRVDAAACTRDSRRPTRERCST) is disordered. The N-terminal 79 residues, 1 to 79 (MAAAAAAASL…TPVRAPVRTR (79 aa)), are a transit peptide targeting the chloroplast. 2 stretches are compositionally biased toward basic and acidic residues: residues 28–37 (RRRDRDRPRV) and 44–54 (RDSRRPTRERC). Glutamate 132 is a binding site for thiamine diphosphate. Cysteine 152 and cysteine 298 are oxidised to a cystine. FAD-binding positions include arginine 234, 340–361 (HGTVYANYAVDNADLLLALGVR), and 383–402 (DIDPSELGKNKQPHVSICAD). A thiamine pyrophosphate binding region spans residues 478-558 (QHQMWATQHY…VKVMVLNNQH (81 aa)). Mg(2+)-binding residues include aspartate 529 and asparagine 556.

This sequence belongs to the TPP enzyme family. It depends on Mg(2+) as a cofactor. Requires thiamine diphosphate as cofactor.

It is found in the plastid. It localises to the chloroplast. The catalysed reaction is 2 pyruvate + H(+) = (2S)-2-acetolactate + CO2. It functions in the pathway amino-acid biosynthesis; L-isoleucine biosynthesis; L-isoleucine from 2-oxobutanoate: step 1/4. Its pathway is amino-acid biosynthesis; L-valine biosynthesis; L-valine from pyruvate: step 1/4. This Oryza sativa subsp. japonica (Rice) protein is Probable acetolactate synthase 2, chloroplastic (ALS2).